A 67-amino-acid chain; its full sequence is Ayadualin (67 aa).

Residues 1–20 form the signal peptide; that stretch reads MNKIILFSAVFLALVFCAEA. Over residues 35 to 54 the composition is skewed to acidic residues; the sequence is PDDTVDIDEGLPDAFDEDYE. The tract at residues 35 to 67 is disordered; that stretch reads PDDTVDIDEGLPDAFDEDYEQDGHNPYPCRGDC. The Integrin-binding motif signature appears at 64–66; sequence RGD.

In terms of tissue distribution, salivary gland.

It localises to the secreted. Functionally, inhibits collagen- and ADP-induced host platelet aggregation by blocking the binding of host integrin alpha-IIb/beta-3 (ITGA2B/ITGB3) to fibrinogen. Inhibits the intrinsic blood coagulation pathway in the host by blocking the activity of host coagulation factor XIIa (F12). This is Ayadualin from Lutzomyia ayacuchensis (Sand fly).